The primary structure comprises 835 residues: Microcephalin (835 aa).

The 93-residue stretch at 1–93 folds into the BRCT 1 domain; that stretch reads MAAPILKDVV…AHIDESLFPA (93 aa). Residues 184–206 form a disordered region; sequence KEKRENLSPTSSQLIQQSHDNPS. Positions 190–206 are enriched in polar residues; the sequence is LSPTSSQLIQQSHDNPS. Phosphoserine is present on residues S279, S287, S296, and S333. T335 bears the Phosphothreonine mark. The span at 346-361 shows a compositional bias: basic residues; it reads HSRPRSSSVKRKRVSH. Disordered stretches follow at residues 346–376 and 418–442; these read HSRP…RKRS and PDNL…PAQF. S548 is subject to Phosphoserine. Residues 557 to 582 are disordered; sequence GLKSTQNRGTTSKISNSSEGEAQSEH. Positions 559-577 are enriched in polar residues; it reads KSTQNRGTTSKISNSSEGE. 2 BRCT domains span residues 640–730 and 751–833; these read SGRG…PFEL and YRGT…NYLL.

Interacts with CDC27 and maybe other components of the APC/C complex. Interacts with histone variant H2AX under DNA damage conditions.

It localises to the cytoplasm. The protein localises to the cytoskeleton. It is found in the microtubule organizing center. The protein resides in the centrosome. Implicated in chromosome condensation and DNA damage induced cellular responses. May play a role in neurogenesis and regulation of the size of the cerebral cortex. The polypeptide is Microcephalin (Gorilla gorilla gorilla (Western lowland gorilla)).